A 252-amino-acid polypeptide reads, in one-letter code: NAC domain-containing protein 83 (252 aa).

The region spanning 14 to 160 (LPPGFRFHPT…NWVLCRIFLK (147 aa)) is the NAC domain. The DNA-binding element occupies 110-166 (VGLKKTLVFYKGKPPHGSRTDWIMHEYRLSSSPPSSMGPTQNWVLCRIFLKKRAGNK). Disordered regions lie at residues 165–194 (NKNDDDDGDSRNLRHNNNNNSSDQIEIITT) and 217–252 (LNLLPSSPSSDHASSGVTTEIFSSSDEETSSCNSFR). 2 stretches are compositionally biased toward low complexity: residues 180–194 (NNNNNSSDQIEIITT) and 219–252 (LLPSSPSSDHASSGVTTEIFSSSDEETSSCNSFR). Residues 213-226 (RTTDLNLLPSSPSS) form a PEST-like region.

Interacts with NAC007/VND4, NAC026/VND5 and NAC030/VND7. Interacts with the mungbean yellow mosaic virus (MYMV) AC1 replication-associated protein. In terms of tissue distribution, expressed in xylem and phloem cells in roots and inflorescence stems. Highly expressed in senescent leaves. Expressed in roots, and abscission and dehiscence tissues, such as axils of bracts and abscission zones in cauline leaves and siliques.

The protein resides in the nucleus. Its function is as follows. Transcriptional repressor that negatively regulates the expression of genes involved in xylem vessel formation. Represses the transcriptional activation activity of NAC030/VND7, which regulates protoxylem vessel differentiation by promoting immature xylem vessel-specific genes expression. Transcriptional activator that regulates the COLD-REGULATED (COR15A and COR15B) and RESPONSIVE TO DEHYDRATION (LTI78/RD29A and LTI65/RD29B) genes by binding directly to their promoters. Mediates signaling crosstalk between salt stress response and leaf aging process. May play a role in DNA replication of mungbean yellow mosaic virus. In Arabidopsis thaliana (Mouse-ear cress), this protein is NAC domain-containing protein 83.